The sequence spans 624 residues: D-3-phosphoglycerate dehydrogenase 2, chloroplastic (624 aa).

The N-terminal 49 residues, 1-49, are a transit peptide targeting the chloroplast; sequence MAFSSSCSSVKAVNSRWTSPSPSPSSRFAVLPAFLHRRYATSVKLTAIS. The residue at position 71 (S71) is a Phosphoserine. NAD(+) is bound by residues 231–232, D251, 310–312, and D336; these read KV and VAR. The active site involves R312. E341 is an active-site residue. H360 serves as the catalytic Proton donor. Position 360 to 363 (360 to 363) interacts with NAD(+); the sequence is HLGA. One can recognise an ACT domain in the interval 552–624; that stretch reads LILCRQVDQP…AIEEFVFLKL (73 aa).

The protein belongs to the D-isomer specific 2-hydroxyacid dehydrogenase family. As to expression, ubiquitous, but highly expressed in roots and in dark-grown leaf tissues. Expressed in the vasculature, stigma, anther filaments and shoot apical meristem. Not detected in the root meristem or in embryo.

It is found in the plastid. It localises to the chloroplast. It carries out the reaction (2R)-3-phosphoglycerate + NAD(+) = 3-phosphooxypyruvate + NADH + H(+). It participates in amino-acid biosynthesis; L-serine biosynthesis; L-serine from 3-phospho-D-glycerate: step 1/3. With respect to regulation, inhibited by 90 uM 3-phosphonooxypyruvate, but not by Ser, Thr, Val, Gly Trp, O-acetyl-L-Ser and Cys. Functionally, involved in the plastidial phosphorylated pathway of serine biosynthesis (PPSB). In Arabidopsis thaliana (Mouse-ear cress), this protein is D-3-phosphoglycerate dehydrogenase 2, chloroplastic (PGDH2).